The following is a 367-amino-acid chain: Histidinol-phosphate aminotransferase 1 (367 aa).

Lys-229 carries the post-translational modification N6-(pyridoxal phosphate)lysine.

It belongs to the class-II pyridoxal-phosphate-dependent aminotransferase family. Histidinol-phosphate aminotransferase subfamily. Homodimer. Pyridoxal 5'-phosphate is required as a cofactor.

The catalysed reaction is L-histidinol phosphate + 2-oxoglutarate = 3-(imidazol-4-yl)-2-oxopropyl phosphate + L-glutamate. Its pathway is amino-acid biosynthesis; L-histidine biosynthesis; L-histidine from 5-phospho-alpha-D-ribose 1-diphosphate: step 7/9. The chain is Histidinol-phosphate aminotransferase 1 from Idiomarina loihiensis (strain ATCC BAA-735 / DSM 15497 / L2-TR).